The following is a 138-amino-acid chain: Gap junction alpha-4 protein (138 aa).

At 1–16 (DWGFLEKLLDQVQEHS) the chain is on the cytoplasmic side. A helical membrane pass occupies residues 17 to 39 (TVVGKIWLTVLFIFRILILGLAG). Residues 40-74 (ESVWGDEQSDFECNTAQPGCTNVCYDQAFPISHIP) are Extracellular-facing. The chain crosses the membrane as a helical span at residues 75–97 (YWVLQFLFVSTPTLVYLGHVIYL). At 98-138 (SRREERLRQKEGELRALPDKDPRVERALAGIERQMAKISVA) the chain is on the cytoplasmic side.

It belongs to the connexin family. Alpha-type (group II) subfamily. A connexon is composed of a hexamer of connexins.

Its subcellular location is the cell membrane. The protein resides in the cell junction. It is found in the gap junction. Functionally, one gap junction consists of a cluster of closely packed pairs of transmembrane channels, the connexons, through which materials of low MW diffuse from one cell to a neighboring cell. This Sus scrofa (Pig) protein is Gap junction alpha-4 protein (GJA4).